A 2602-amino-acid polypeptide reads, in one-letter code: Non-reducing polyketide synthase SAT8 (2602 aa).

The Nucleophile; for transacylase activity role is filled by Cys130. His249 functions as the Proton donor/acceptor; for transacylase activity in the catalytic mechanism. Residues 379 to 398 (MLENSTSPPSPAATSSNSHC) form a disordered region. Over residues 382-396 (NSTSPPSPAATSSNS) the composition is skewed to low complexity. The Ketosynthase family 3 (KS3) domain occupies 404–822 (PRDIAIVGMS…GSNAAMVVTQ (419 aa)). Residues Cys571, His706, and His745 each act as for beta-ketoacyl synthase activity in the active site. Positions 926–1216 (FGGQMSTFVG…AMARRSLDSN (291 aa)) are malonyl-CoA:ACP transacylase (MAT). The segment at 1298 to 1442 (GPLFGLLTFV…GKLDLLSSSE (145 aa)) is N-terminal hotdog fold. The 321-residue stretch at 1298–1618 (GPLFGLLTFV…YTRIPRHSMT (321 aa)) folds into the PKS/mFAS DH domain. The tract at residues 1331–1616 (LVIPHIIART…IAYTRIPRHS (286 aa)) is product template (PT) domain. The active-site Proton acceptor; for dehydratase activity is His1335. A C-terminal hotdog fold region spans residues 1467–1618 (GDVSGLQGRS…YTRIPRHSMT (152 aa)). Asp1524 acts as the Proton donor; for dehydratase activity in catalysis. In terms of domain architecture, Carrier spans 1658–1733 (DTLKQTVGQI…AFVRYISKVV (76 aa)). Ser1692 is modified (O-(pantetheine 4'-phosphoryl)serine). The interval 1737–1772 (DDLGTPSHSDNDSHVTGTTATPNSSSASSDTHHGNS) is disordered. The span at 1752–1765 (TGTTATPNSSSASS) shows a compositional bias: low complexity. Positions 1979-2150 (VEKVKDDFQG…GYGHVDWTDG (172 aa)) are methyltransferase domain. The segment at 2229–2530 (IVVVTGATGS…IPLGEWVRKV (302 aa)) is NADPH-binding domain.

Pantetheine 4'-phosphate serves as cofactor.

It functions in the pathway mycotoxin biosynthesis. Functionally, non-reducing polyketide synthase; part of the satratoxin SC1 cluster involved in the biosynthesis of satratoxins, trichothecene mycotoxins that are associated with human food poisonings. Satratoxins are suggested to be made by products of multiple gene clusters (SC1, SC2 and SC3) that encode 21 proteins in all, including polyketide synthases, acetyltransferases, and other enzymes expected to modify the trichothecene skeleton. SC1 encodes 10 proteins, SAT1 to SAT10. The largest are SAT8, which encodes a putative polyketide synthase (PKS) with a conventional non-reducing architecture, and SAT10, a putative protein containing four ankyrin repeats and thus may be involved in protein scaffolding. The putative short-chain reductase SAT3 may assist the PKS in some capacity. SAT6 contains a secretory lipase domain and acts probably as a trichothecene esterase. SAT5 encodes a putative acetyltransferase, and so, with SAT6, may affect endogenous protection from toxicity. The probable transcription factor SAT9 may regulate the expression of the SC1 cluster. SC2 encodes proteins SAT11 to SAT16, the largest of which encodes the putative reducing PKS SAT13. SAT11 is a cytochrome P450 monooxygenase, while SAT14 and SAT16 are probable acetyltransferases. The SC2 cluster may be regulated by the transcription factor SAT15. SC3 is a small cluster that encodes 5 proteins, SAT17 to SAT21. SAT21 is a putative MFS-type transporter which may have a role in exporting secondary metabolites. The four other proteins putatively encoded in SC3 include the taurine hydroxylase-like protein SAT17, the O-methyltransferase SAT18, the acetyltransferase SAT19, and the Cys6-type zinc finger SAT20, the latter being probably involved in regulation of SC3 expression. The polypeptide is Non-reducing polyketide synthase SAT8 (Stachybotrys chartarum (strain CBS 109288 / IBT 7711) (Toxic black mold)).